Here is a 365-residue protein sequence, read N- to C-terminus: MINLGAKQSTIVVAMSGGVDSSAVAAMLNEQGHNVIGITLQLYDHGMAVGKKNACCAGQDIYDAKMVANKLGIPHYVLDYESKFKESVIDNFVDSYLQGETPLPCVQCNKSVKFRDLIKTARELGADKLATGHYVRKINGDNGAELHTGLDPAKDQSYFLFTTTKEQLEYLRFPLGGLTKGETRKLASKFGLEVADKPDSQDICFIPDGNYKSVINKIRPNSSESGKIIHVNGFELGEHSGIINYTIGQRRGLGIAYNEPLYVVKIDPKDNIVYVGPESALNVQEFIIRDVNWLADEIKDNEKLEVAVKIRSTRPPRLAEISKLGDDKMKVKFLCKEKAVAPGQACVIYAGARVLGGGWITREIR.

Residues 14-21 (AMSGGVDS) and Leu40 each bind ATP. Catalysis depends on Cys108, which acts as the Nucleophile. Cysteines 108 and 204 form a disulfide. Residue Gly132 coordinates ATP. Residues 154–156 (KDQ) are interaction with tRNA. The active-site Cysteine persulfide intermediate is Cys204.

The protein belongs to the MnmA/TRMU family.

The protein localises to the cytoplasm. It catalyses the reaction S-sulfanyl-L-cysteinyl-[protein] + uridine(34) in tRNA + AH2 + ATP = 2-thiouridine(34) in tRNA + L-cysteinyl-[protein] + A + AMP + diphosphate + H(+). Catalyzes the 2-thiolation of uridine at the wobble position (U34) of tRNA, leading to the formation of s(2)U34. This is tRNA-specific 2-thiouridylase MnmA from Rickettsia rickettsii (strain Iowa).